A 184-amino-acid polypeptide reads, in one-letter code: MKNITDSFVSVGHWPSAGSFEFNTDILATNPINLSVVLGVLIFFGKGVLNDLLDKRKQRILSTIRNSEELRRGAIEQLERARVRLRKVEIEADEYRTNGYYEIEREKGNLINATCNSLERLENYKNETLFFEKQRAINKVRQEVLQQALQRALGTLNSCLNIEVHFRTISANIDILGSMEEITD.

A helical transmembrane segment spans residues 27-49 (LATNPINLSVVLGVLIFFGKGVL).

It belongs to the ATPase B chain family. F-type ATPases have 2 components, F(1) - the catalytic core - and F(0) - the membrane proton channel. F(1) has five subunits: alpha(3), beta(3), gamma(1), delta(1), epsilon(1). F(0) has four main subunits: a(1), b(1), b'(1) and c(10-14). The alpha and beta chains form an alternating ring which encloses part of the gamma chain. F(1) is attached to F(0) by a central stalk formed by the gamma and epsilon chains, while a peripheral stalk is formed by the delta, b and b' chains.

It is found in the plastid. It localises to the chloroplast thylakoid membrane. Its function is as follows. F(1)F(0) ATP synthase produces ATP from ADP in the presence of a proton or sodium gradient. F-type ATPases consist of two structural domains, F(1) containing the extramembraneous catalytic core and F(0) containing the membrane proton channel, linked together by a central stalk and a peripheral stalk. During catalysis, ATP synthesis in the catalytic domain of F(1) is coupled via a rotary mechanism of the central stalk subunits to proton translocation. Component of the F(0) channel, it forms part of the peripheral stalk, linking F(1) to F(0). In Phalaenopsis aphrodite subsp. formosana (Moth orchid), this protein is ATP synthase subunit b, chloroplastic.